A 197-amino-acid polypeptide reads, in one-letter code: ADP-ribosylation factor 1 (197 aa).

A lipid anchor (N-myristoyl glycine) is attached at Gly2. Residues 24–31 (GLDAAGKT), 67–71 (DVGGQ), and 126–129 (NKQD) contribute to the GTP site.

Belongs to the small GTPase superfamily. Arf family.

It localises to the golgi apparatus. The catalysed reaction is GTP + H2O = GDP + phosphate + H(+). Its function is as follows. GTP-binding protein involved in protein trafficking; may modulate vesicle budding and uncoating within the Golgi apparatus. The sequence is that of ADP-ribosylation factor 1 from Solanum tuberosum (Potato).